Consider the following 556-residue polypeptide: Genetic interactor of prohibitins 3, mitochondrial (556 aa).

The N-terminal 21 residues, 1 to 21 (MLNLCHALRGVRQFSCSVIVK), are a transit peptide targeting the mitochondrion. The CP-type G domain occupies 113–305 (ESTLNDILNY…LFDLPGYSTS (193 aa)).

It belongs to the TRAFAC class YlqF/YawG GTPase family. GEP3 subfamily.

Its subcellular location is the mitochondrion. Its function is as follows. Interacts genetically with prohibitins and thus may be involved in the mitochondrial lipid metabolism. The polypeptide is Genetic interactor of prohibitins 3, mitochondrial (GEP3) (Saccharomyces cerevisiae (strain YJM789) (Baker's yeast)).